A 254-amino-acid polypeptide reads, in one-letter code: MIIVISPAKSQNFEPIKTAYQFTQPIFKQQIIKLINTLKHYEVEEIEKLMKISPKLAEEVFAKHNSFNPNKYDNSNAKAAIFTFSGDVYKGLEADTLDNKTIEYAQNHLLMLSGLYGLVRPLDLIQAYRLEMGTNIKIDGKILHKYWQDKITTQLNEYFSQQQNKILINLASNEYSQAIDKKSLAVKWLDIDFKENKAGAYKTIGIHAKKARGLMTRYILENRIENVSDIKKFNVAGYQFNPDFSDENLLCFTR.

This sequence belongs to the UPF0246 family.

In Francisella tularensis subsp. holarctica (strain OSU18), this protein is UPF0246 protein FTH_1656.